Reading from the N-terminus, the 426-residue chain is Dynein regulatory complex protein 10 (426 aa).

2 disordered regions span residues 18-37 and 399-426; these read TRIG…LKPL and SKKK…KGKK. The IQ domain maps to 377-406; the sequence is MVRAATLIQAFWKGYLVRSLLRSKKKRGKG. Residues 399 to 408 are compositionally biased toward basic residues; the sequence is SKKKRGKGKA. Residues 409–426 show a composition bias toward basic and acidic residues; it reads KGKEKGKQKGKEKGKGKK.

Belongs to the DRC10 family. Component of the nexin-dynein regulatory complex (N-DRC). Interacts with CFAP52.

It is found in the cytoplasm. Its subcellular location is the cytoskeleton. It localises to the flagellum axoneme. Component of the nexin-dynein regulatory complex (N-DRC), a key regulator of ciliary/flagellar motility which maintains the alignment and integrity of the distal axoneme and regulates microtubule sliding in motile axonemes. The protein is Dynein regulatory complex protein 10 (IQCD) of Macaca fascicularis (Crab-eating macaque).